Consider the following 776-residue polypeptide: DNA topoisomerase 1 (776 aa).

Residues 1–111 (MKLVIVESPA…VKSDDFFKRV (111 aa)) enclose the Toprim domain. Positions 7 and 80 each coordinate Mg(2+). Positions 132–568 (DANLVNAQQA…FWSGFNHNIE (437 aa)) constitute a Topo IA-type catalytic domain. The tract at residues 166–171 (SAGRVQ) is interaction with DNA. Residue Y304 is the O-(5'-phospho-DNA)-tyrosine intermediate of the active site. A C4-type zinc finger spans residues 600-627 (CPSCKTGELSLKLGKFGAFLACSNYPEC).

It belongs to the type IA topoisomerase family. As to quaternary structure, monomer. Mg(2+) is required as a cofactor.

It catalyses the reaction ATP-independent breakage of single-stranded DNA, followed by passage and rejoining.. In terms of biological role, releases the supercoiling and torsional tension of DNA, which is introduced during the DNA replication and transcription, by transiently cleaving and rejoining one strand of the DNA duplex. Introduces a single-strand break via transesterification at a target site in duplex DNA. The scissile phosphodiester is attacked by the catalytic tyrosine of the enzyme, resulting in the formation of a DNA-(5'-phosphotyrosyl)-enzyme intermediate and the expulsion of a 3'-OH DNA strand. The free DNA strand then undergoes passage around the unbroken strand, thus removing DNA supercoils. Finally, in the religation step, the DNA 3'-OH attacks the covalent intermediate to expel the active-site tyrosine and restore the DNA phosphodiester backbone. The chain is DNA topoisomerase 1 from Rickettsia felis (strain ATCC VR-1525 / URRWXCal2) (Rickettsia azadi).